Here is a 939-residue protein sequence, read N- to C-terminus: U3 small nucleolar RNA-associated protein 21 (939 aa).

Ser-2 is modified (N-acetylserine). WD repeat units lie at residues 40–71 (ATGT…LLFV), 81–111 (VALS…HLLE), 119–158 (EHLC…TKLT), 168–201 (VSLQ…LVFT), 208–245 (QITT…RTIK), 252–287 (SSLS…IHVL), 295–347 (YGGV…RSRG), 354–388 (SYIA…QSQE), 415–454 (VALA…GRWT), 463–497 (VKSV…LRKK), 505–541 (VTGI…GKLK), 546–581 (ITAM…VRQL), 583–624 (GHSN…DGII), and 626–664 (DNVA…KTVS). Ser-772 is modified (phosphoserine).

Interacts with snoRNA U3. Interacts with MPP10. Interacts (via WD repeats) with UTP18. Component of the ribosomal small subunit (SSU) processome composed of at least 40 protein subunits and snoRNA U3.

Its subcellular location is the nucleus. The protein localises to the nucleolus. Its function is as follows. Involved in nucleolar processing of pre-18S ribosomal RNA and ribosome assembly. This chain is U3 small nucleolar RNA-associated protein 21 (UTP21), found in Saccharomyces cerevisiae (strain ATCC 204508 / S288c) (Baker's yeast).